The following is a 599-amino-acid chain: UvrABC system protein C (599 aa).

A GIY-YIG domain is found at 13–91; that stretch reads NLPGVYRMIN…IKGFMPRYNV (79 aa). The region spanning 200-235 is the UVR domain; sequence QQVMDELGEKMNEAAEKMEYELAAVYRDRIQSLRQV.

This sequence belongs to the UvrC family. In terms of assembly, interacts with UvrB in an incision complex.

The protein localises to the cytoplasm. Its function is as follows. The UvrABC repair system catalyzes the recognition and processing of DNA lesions. UvrC both incises the 5' and 3' sides of the lesion. The N-terminal half is responsible for the 3' incision and the C-terminal half is responsible for the 5' incision. The polypeptide is UvrABC system protein C (Methylobacillus flagellatus (strain ATCC 51484 / DSM 6875 / VKM B-1610 / KT)).